Here is a 401-residue protein sequence, read N- to C-terminus: 8-amino-7-oxononanoate synthase (401 aa).

Residue Arg24 participates in substrate binding. Position 111-112 (111-112 (GF)) interacts with pyridoxal 5'-phosphate. His137 contacts substrate. Positions 183, 211, and 240 each coordinate pyridoxal 5'-phosphate. At Lys243 the chain carries N6-(pyridoxal phosphate)lysine. Thr357 provides a ligand contact to substrate.

This sequence belongs to the class-II pyridoxal-phosphate-dependent aminotransferase family. BioF subfamily. Homodimer. Pyridoxal 5'-phosphate serves as cofactor.

The catalysed reaction is 6-carboxyhexanoyl-[ACP] + L-alanine + H(+) = (8S)-8-amino-7-oxononanoate + holo-[ACP] + CO2. The protein operates within cofactor biosynthesis; biotin biosynthesis. Functionally, catalyzes the decarboxylative condensation of pimeloyl-[acyl-carrier protein] and L-alanine to produce 8-amino-7-oxononanoate (AON), [acyl-carrier protein], and carbon dioxide. The chain is 8-amino-7-oxononanoate synthase from Xylella fastidiosa (strain M12).